A 71-amino-acid chain; its full sequence is MPVIKVRENEPFDVALRRFKRSCEKAGILSEVRRREHFEKPTTVRKRAKAAAVKRHLKKLARENARRVRLY.

This sequence belongs to the bacterial ribosomal protein bS21 family.

The polypeptide is Small ribosomal subunit protein bS21 (Photobacterium profundum (strain SS9)).